A 251-amino-acid chain; its full sequence is Putative deaminase AgaI (251 aa).

The Proton acceptor; for enolization step role is filled by Asp86. Asn154 (for ring-opening step) is an active-site residue. Residue His156 is the Proton acceptor; for ring-opening step of the active site. Glu161 functions as the For ring-opening step in the catalytic mechanism.

The protein belongs to the glucosamine/galactosamine-6-phosphate isomerase family.

This Escherichia coli (strain K12) protein is Putative deaminase AgaI (agaI).